The chain runs to 323 residues: Cytochrome c biogenesis protein CcsA (323 aa).

Transmembrane regions (helical) follow at residues V18–Y38, K43–W63, L71–F91, L99–L119, L146–F166, V227–N247, W256–I276, and A288–L308.

Belongs to the CcmF/CycK/Ccl1/NrfE/CcsA family. As to quaternary structure, may interact with Ccs1.

It is found in the plastid. It localises to the chloroplast thylakoid membrane. Required during biogenesis of c-type cytochromes (cytochrome c6 and cytochrome f) at the step of heme attachment. The chain is Cytochrome c biogenesis protein CcsA from Spinacia oleracea (Spinach).